Consider the following 96-residue polypeptide: Co-chaperonin GroES (96 aa).

Belongs to the GroES chaperonin family. In terms of assembly, heptamer of 7 subunits arranged in a ring. Interacts with the chaperonin GroEL.

It is found in the cytoplasm. Functionally, together with the chaperonin GroEL, plays an essential role in assisting protein folding. The GroEL-GroES system forms a nano-cage that allows encapsulation of the non-native substrate proteins and provides a physical environment optimized to promote and accelerate protein folding. GroES binds to the apical surface of the GroEL ring, thereby capping the opening of the GroEL channel. In Paraburkholderia phymatum (strain DSM 17167 / CIP 108236 / LMG 21445 / STM815) (Burkholderia phymatum), this protein is Co-chaperonin GroES.